Reading from the N-terminus, the 86-residue chain is Chymotrypsin inhibitor (86 aa).

The signal sequence occupies residues 1 to 16; sequence MKTLCIFLVLVVAVAA. Intrachain disulfides connect C26–C58, C38–C50, C42–C82, and C60–C76. One can recognise a TIL domain in the interval 26 to 82; it reads CPPNKEFGSYGDCPPSCLKNPPNFCTLKLNYGCKCKEGYVLTRYQDYESDCIKPEEC.

It belongs to the serine protease inhibitor-like (TIL domain-containing) family. As to expression, only expressed in fat body.

The protein localises to the secreted. Its function is as follows. Serine protease inhibitor that inhibits chymotrypsin (IC(50)=34.13 nM, Ki=49.85 nM), microbial serine proteases (subtilisin A (IC(50)=21.31 nM, Ki=20.51 nM) and proteinase K (IC(50)=52.56 nM, Ki=65.42 nM)), as well as human neutrophil elastase (IC(50)=11.54 nM, Ki=8.74 nM), and porcine pancreatic elastase (IC(50)=19.07 nM, Ki=11.32 nM). This chain is Chymotrypsin inhibitor, found in Araneus ventricosus (Orbweaver spider).